The sequence spans 517 residues: Type II methyltransferase M.CeqI (517 aa).

Disordered regions lie at residues 1 to 21 (MVVTSSAGCASRPRGRGRWPR) and 33 to 62 (GRPRRPFLRPTVPGPTSARPRRGRAPHGRS). A compositionally biased stretch (basic residues) spans 51–62 (RPRRGRAPHGRS). TPR repeat units follow at residues 283–316 (AEFYFRLGESYFAHHQYTFAVSYLEQAIDLFENN), 361–394 (ALLLRALGLNRVRQRKLYEAEMYFAEALTIGDHS), and 476–509 (SELAEEIAEYYKQQSLLEKAFYYMKEALHYRTNM).

The catalysed reaction is a 2'-deoxyadenosine in DNA + S-adenosyl-L-methionine = an N(6)-methyl-2'-deoxyadenosine in DNA + S-adenosyl-L-homocysteine + H(+). Its function is as follows. A methylase, recognizes the double-stranded sequence 5'-GATATC-3', methylates A-? on both strands, and protects the DNA from cleavage by the CeqI endonuclease. This Rhodococcus hoagii (Corynebacterium equii) protein is Type II methyltransferase M.CeqI (ceqIM).